The chain runs to 256 residues: H-2 class II histocompatibility antigen, A-B alpha chain (256 aa).

The first 23 residues, 1-23 (MPRSRALILGVLALTTMLSLCGG), serve as a signal peptide directing secretion. The alpha-1 stretch occupies residues 24 to 111 (EDDIEADHVG…KRSNSTPATN (88 aa)). Residues 24–218 (EDDIEADHVG…IPAPMSELTE (195 aa)) are Extracellular-facing. The segment at 112–205 (EAPQATVFPK…GLEEPVLKHW (94 aa)) is alpha-2. The 93-residue stretch at 114–206 (PQATVFPKSP…LEEPVLKHWE (93 aa)) folds into the Ig-like C1-type domain. A disulfide bridge links Cys-134 with Cys-190. N-linked (GlcNAc...) asparagine glycosylation is present at Asn-145. The interval 206–218 (EPEIPAPMSELTE) is connecting peptide. The helical transmembrane segment at 219-244 (TVVCALGLSVGLVGIVVGTIFIIQGL) threads the bilayer. Residues 245-256 (RSGGTSRHPGPL) lie on the Cytoplasmic side of the membrane.

This sequence belongs to the MHC class II family.

Its subcellular location is the membrane. This Mus musculus (Mouse) protein is H-2 class II histocompatibility antigen, A-B alpha chain (H2-Aa).